Here is a 593-residue protein sequence, read N- to C-terminus: Serine/threonine-protein kinase SSN3 (593 aa).

The region spanning 90 to 489 (YEIIGYIAAG…AIDALDHVYF (400 aa)) is the Protein kinase domain. Position 96 to 104 (96 to 104 (IAAGTYGKV)) interacts with ATP. A disordered region spans residues 161 to 199 (KPSHKRFTPPNNSNSTQIRSNSGSETNVRINSSSITNNS). Polar residues predominate over residues 169 to 185 (PPNNSNSTQIRSNSGSE). Positions 186–199 (TNVRINSSSITNNS) are enriched in low complexity. ATP is bound at residue Lys-211. Asp-312 acts as the Proton acceptor in catalysis. Disordered stretches follow at residues 517–551 (DNDITNVGNDNNQANHSQKQPMHGNNNNKNGNMNG) and 569–593 (AAVSGNGNNPTSNTATGGSARKKRK). A compositionally biased stretch (polar residues) spans 518–536 (NDITNVGNDNNQANHSQKQ). Residues 540–551 (GNNNNKNGNMNG) are compositionally biased toward low complexity. Residues 573–585 (GNGNNPTSNTATG) are compositionally biased toward polar residues.

Belongs to the protein kinase superfamily. CMGC Ser/Thr protein kinase family. CDC2/CDKX subfamily. In terms of assembly, component of the SRB8-11 complex, a regulatory module of the Mediator complex. Requires Mg(2+) as cofactor.

It localises to the nucleus. It catalyses the reaction L-seryl-[protein] + ATP = O-phospho-L-seryl-[protein] + ADP + H(+). The catalysed reaction is L-threonyl-[protein] + ATP = O-phospho-L-threonyl-[protein] + ADP + H(+). The enzyme catalyses [DNA-directed RNA polymerase] + ATP = phospho-[DNA-directed RNA polymerase] + ADP + H(+). Functionally, component of the SRB8-11 complex. The SRB8-11 complex is a regulatory module of the Mediator complex which is itself involved in regulation of basal and activated RNA polymerase II-dependent transcription. The SRB8-11 complex may be involved in the transcriptional repression of a subset of genes regulated by Mediator. It may inhibit the association of the Mediator complex with RNA polymerase II to form the holoenzyme complex. The SRB8-11 complex phosphorylates the C-terminal domain (CTD) of the largest subunit of RNA polymerase II. The sequence is that of Serine/threonine-protein kinase SSN3 (SSN3) from Kluyveromyces lactis (strain ATCC 8585 / CBS 2359 / DSM 70799 / NBRC 1267 / NRRL Y-1140 / WM37) (Yeast).